The chain runs to 294 residues: Endolytic peptidoglycan transglycosylase RlpA (294 aa).

The first 23 residues, 1–23 (MKQKIFQILTALCCIFYVMSAQA), serve as a signal peptide directing secretion. The 76-residue stretch at 216–291 (EKYTTVYKIR…NYSKPLIVYT (76 aa)) folds into the SPOR domain.

The protein belongs to the RlpA family.

Its function is as follows. Lytic transglycosylase with a strong preference for naked glycan strands that lack stem peptides. The chain is Endolytic peptidoglycan transglycosylase RlpA from Pasteurella multocida (strain Pm70).